Consider the following 319-residue polypeptide: Probable NAD(P)H-dependent D-xylose reductase xyl1 (319 aa).

Asn-26 carries N-linked (GlcNAc...) asparagine glycosylation. Tyr-50 acts as the Proton donor in catalysis. A substrate-binding site is contributed by His-112. N-linked (GlcNAc...) asparagine glycosylation is found at Asn-141 and Asn-167. NAD(+) contacts are provided by residues 166 to 167 (SN), 215 to 224 (SSFGPLSFLE), and 271 to 281 (KSNNPQRLKQN).

This sequence belongs to the aldo/keto reductase family.

The catalysed reaction is xylitol + NAD(+) = D-xylose + NADH + H(+). It carries out the reaction xylitol + NADP(+) = D-xylose + NADPH + H(+). The protein operates within carbohydrate metabolism; D-xylose degradation. Catalyzes the initial reaction in the xylose utilization pathway by reducing D-xylose into xylitol. Xylose is a major component of hemicelluloses such as xylan. Most fungi utilize D-xylose via three enzymatic reactions, xylose reductase (XR), xylitol dehydrogenase (XDH), and xylulokinase, to form xylulose 5-phosphate, which enters pentose phosphate pathway. This Aspergillus niger (strain ATCC MYA-4892 / CBS 513.88 / FGSC A1513) protein is Probable NAD(P)H-dependent D-xylose reductase xyl1 (xyl1).